Here is a 104-residue protein sequence, read N- to C-terminus: Large ribosomal subunit protein bL21 (104 aa).

This sequence belongs to the bacterial ribosomal protein bL21 family. In terms of assembly, part of the 50S ribosomal subunit. Contacts protein L20.

This protein binds to 23S rRNA in the presence of protein L20. In Pseudomonas putida (strain W619), this protein is Large ribosomal subunit protein bL21.